The primary structure comprises 325 residues: uncharacterized protein (325 aa).

Residues 1 to 26 (MQGRVAGSCAPLGLLLVCLHLPGLFA) form the signal peptide. The segment covering 41–60 (GTNLPQLGQPSSTGPSNSEH) has biased composition (polar residues). 2 disordered regions span residues 41 to 110 (GTNL…MDSW) and 147 to 189 (GSGP…AGGK). The span at 147–157 (GSGPLPGESSP) shows a compositional bias: low complexity.

In terms of assembly, binds to numerous extracellular matrix proteins. In terms of tissue distribution, expressed in skin and tonsils.

The protein localises to the secreted. The protein resides in the extracellular space. Its subcellular location is the extracellular matrix. This is an uncharacterized protein from Homo sapiens (Human).